Reading from the N-terminus, the 435-residue chain is Protein deadpan (435 aa).

The span at 18–27 (GYSDSYGSNG) shows a compositional bias: low complexity. Residues 18-48 (GYSDSYGSNGRMSNPNGLSKAELRKTNKPIM) form a disordered region. In terms of domain architecture, bHLH spans 40 to 97 (LRKTNKPIMEKRRRARINHCLNELKSLILEAMKKDPARHTKLEKADILEMTVKHLQSV). Positions 116–149 (FKTGFVECAEEVNRYVSQMDGIDTGVRQRLSAHL) constitute an Orange domain. Disordered regions lie at residues 305–334 (QLPV…AASP) and 349–416 (STPP…DEPS). Residues 311-324 (STSPPLSPISSISS) show a composition bias toward low complexity. Composition is skewed to polar residues over residues 355 to 378 (SAET…SSGC) and 385 to 395 (LQQQQVSSTSG). A phosphoserine mark is found at Ser407, Ser408, and Ser411. Residues 432 to 435 (WRPW) carry the WRPW motif motif.

In terms of assembly, homodimer. Heterodimer with E(spl)mgamma-HLH and E(spl). Transcription repression requires formation of a complex with the corepressor protein Groucho. Interacts (via bHLH motif) with sisA. Interacts with da.

It localises to the nucleus. Functionally, transcriptional repressor of genes that require a bHLH protein for their transcription. In the larval brain, required to maintain the self-renewal and identity of type II neuroblasts by regulating the expression of the transcriptional repressor erm together with other self-renewal transcriptional repressors such as klu and E(spl)mgamma-HLH. As part of its role in neuroblasts development, has been shown to be a direct target of the Notch signaling pathway, however might work also independently of N/Notch. In the developing larval and pupal brain, required for mushroom body differentiation. Involved in sex determination and SXL transcription repression when in complex with the corepressor protein Groucho. In Drosophila melanogaster (Fruit fly), this protein is Protein deadpan (dpn).